Consider the following 662-residue polypeptide: MNQFKVISKFNPTGDQPKAIKSIAKGIEKREKFQTLIGVTGSGKTFTMANIIEKVQKPTLVLAHNKTLAAQLCSEFREFFPNNAVEYFVSYYDYYQPEAYVAQSDTYIEKDASINDEIDKLRHSATSALFERKDVIIVASVSCIYGLGNPEEYKKLTISLREGMEKDRDEIIKKLVEIQYERNDIDFSRGTFRVKGDVLDIFPASSSSKAVRVEFFGDEIDRIKEFDVLTGETITKLKHISIFPASHFATSKDRLEVAIKDIEEELEERVKELVSQDKILEAQRLKQRTNFDIEMMREVGYCTGIENYSRVLDGRAKGTPPQTLLDYFPQDFLLFIDESHVTLPQVKAMQAGDKSRKDSLVEYGFRLPCAYDNRPLTFKEFENKLNQVVFVSATPAKYELEYSTNTAEQVIRPTGLLDPEIIVKPVKGQIDDLYTSIQETIKRGFRILVTTLTKKMAEDLTDYLKEMGVKTRYLHSDIDTIERMKIIHDLRKGEFHVLVGINLLREGLDIPEVALVTILDADKEGFLRSETSLIQTVGRAARNSESKVIMYGDVITKSMEKTIKETNRRRKIQMEYNEEHGIVPKTIIKDIREVIQISDIAEERKEYDNLNEALKSYNNDIDKLIEKYEEEMKEAAQNLQFEKAAHLRDVIYKLKKDKETEL.

The Helicase ATP-binding domain maps to 25 to 182 (KGIEKREKFQ…KKLVEIQYER (158 aa)). Residue 38-45 (GVTGSGKT) participates in ATP binding. The short motif at 91 to 114 (YYDYYQPEAYVAQSDTYIEKDASI) is the Beta-hairpin element. The Helicase C-terminal domain maps to 429–595 (QIDDLYTSIQ…TIIKDIREVI (167 aa)). Positions 622 to 657 (DKLIEKYEEEMKEAAQNLQFEKAAHLRDVIYKLKKD) constitute a UVR domain.

It belongs to the UvrB family. As to quaternary structure, forms a heterotetramer with UvrA during the search for lesions. Interacts with UvrC in an incision complex.

The protein localises to the cytoplasm. In terms of biological role, the UvrABC repair system catalyzes the recognition and processing of DNA lesions. A damage recognition complex composed of 2 UvrA and 2 UvrB subunits scans DNA for abnormalities. Upon binding of the UvrA(2)B(2) complex to a putative damaged site, the DNA wraps around one UvrB monomer. DNA wrap is dependent on ATP binding by UvrB and probably causes local melting of the DNA helix, facilitating insertion of UvrB beta-hairpin between the DNA strands. Then UvrB probes one DNA strand for the presence of a lesion. If a lesion is found the UvrA subunits dissociate and the UvrB-DNA preincision complex is formed. This complex is subsequently bound by UvrC and the second UvrB is released. If no lesion is found, the DNA wraps around the other UvrB subunit that will check the other stand for damage. This is UvrABC system protein B from Clostridium botulinum (strain Langeland / NCTC 10281 / Type F).